Consider the following 442-residue polypeptide: Probable serine/threonine-protein kinase PBL17 (442 aa).

Residue G2 is the site of N-myristoyl glycine attachment. The S-palmitoyl cysteine moiety is linked to residue C4. Position 79 is a phosphothreonine (T79). The Protein kinase domain maps to 90–370 (FRPDYILGEG…NHVVEVLETL (281 aa)). Residues 96 to 104 (LGEGGFGVV) and K125 each bind ATP. Y170 carries the post-translational modification Phosphotyrosine. Residue D220 is the Proton acceptor of the active site. Position 254 is a phosphoserine (S254). 2 positions are modified to phosphothreonine: T255 and T260. A Phosphotyrosine modification is found at Y268. Positions 385–442 (HSRGKSVTLYEASSDSQGTRDGNGQRRRRPESGRSKSEAAVDTEKYVSTLSEPDTTKI) are disordered. The span at 395–406 (EASSDSQGTRDG) shows a compositional bias: polar residues. Residues 414–429 (PESGRSKSEAAVDTEK) show a composition bias toward basic and acidic residues. Residues 430–442 (YVSTLSEPDTTKI) show a composition bias toward polar residues.

This sequence belongs to the protein kinase superfamily. Ser/Thr protein kinase family.

The protein resides in the cell membrane. It catalyses the reaction L-seryl-[protein] + ATP = O-phospho-L-seryl-[protein] + ADP + H(+). The enzyme catalyses L-threonyl-[protein] + ATP = O-phospho-L-threonyl-[protein] + ADP + H(+). May be involved in plant defense signaling. This Arabidopsis thaliana (Mouse-ear cress) protein is Probable serine/threonine-protein kinase PBL17.